A 640-amino-acid polypeptide reads, in one-letter code: UvrABC system protein C (640 aa).

In terms of domain architecture, GIY-YIG spans 22 to 101 (NDPGCYLMKD…IKSHQPYFNV (80 aa)). Residues 211–246 (DELRILLEKQMISFSESLKFEEAGSVRDQLKGIDRL) enclose the UVR domain.

Belongs to the UvrC family. As to quaternary structure, interacts with UvrB in an incision complex.

It is found in the cytoplasm. Functionally, the UvrABC repair system catalyzes the recognition and processing of DNA lesions. UvrC both incises the 5' and 3' sides of the lesion. The N-terminal half is responsible for the 3' incision and the C-terminal half is responsible for the 5' incision. The chain is UvrABC system protein C from Prochlorococcus marinus (strain NATL1A).